The following is a 559-amino-acid chain: Glutamine--tRNA ligase (559 aa).

Residues 44–54 carry the 'HIGH' region motif; sequence PEPNGYLHIGH. Residues 45–47 and 51–57 each bind ATP; these read EPN and HIGHAKS. Asp77 and Tyr222 together coordinate L-glutamine. ATP is bound by residues Thr241 and 272 to 273; that span reads RL. A 'KMSKS' region motif is present at residues 279–283; the sequence is LTSKR.

It belongs to the class-I aminoacyl-tRNA synthetase family. In terms of assembly, monomer.

The protein localises to the cytoplasm. The catalysed reaction is tRNA(Gln) + L-glutamine + ATP = L-glutaminyl-tRNA(Gln) + AMP + diphosphate. In Pasteurella multocida (strain Pm70), this protein is Glutamine--tRNA ligase.